Reading from the N-terminus, the 20-residue chain is VKRCCDEEECSSACWPCCWG.

A propeptide spanning residues 1-3 (VKR) is cleaved from the precursor. 3 cysteine pairs are disulfide-bonded: Cys-4/Cys-18, Cys-5/Cys-14, and Cys-10/Cys-17. Residue Pro-16 is modified to 4-hydroxyproline. Trp-19 carries the tryptophan amide modification.

Belongs to the conotoxin M superfamily. In terms of tissue distribution, expressed by the venom duct.

It is found in the secreted. The sequence is that of Conotoxin PnMLKM-D0211 from Conus pennaceus (Feathered cone).